The chain runs to 440 residues: Protein root UVB sensitive 3 (440 aa).

The next 3 helical transmembrane spans lie at 109 to 129 (IGATFQWFLRDFTGMLGGILF), 154 to 174 (IGMLMDLLSPLFPSAFIVVVC), and 232 to 252 (FTSGNPMAIWLSFLSLTVFHM).

Belongs to the RUS1 family.

It is found in the membrane. The sequence is that of Protein root UVB sensitive 3 from Arabidopsis thaliana (Mouse-ear cress).